We begin with the raw amino-acid sequence, 267 residues long: Hydroxyacylglutathione hydrolase (267 aa).

Zn(2+)-binding residues include H55, H57, D59, H60, H121, D138, and H176.

This sequence belongs to the metallo-beta-lactamase superfamily. Glyoxalase II family. Monomer. Zn(2+) is required as a cofactor.

The enzyme catalyses an S-(2-hydroxyacyl)glutathione + H2O = a 2-hydroxy carboxylate + glutathione + H(+). It functions in the pathway secondary metabolite metabolism; methylglyoxal degradation; (R)-lactate from methylglyoxal: step 2/2. In terms of biological role, thiolesterase that catalyzes the hydrolysis of S-D-lactoyl-glutathione to form glutathione and D-lactic acid. The sequence is that of Hydroxyacylglutathione hydrolase from Shewanella sp. (strain ANA-3).